The sequence spans 324 residues: Glyoxylate/hydroxypyruvate reductase B (324 aa).

Residues Arg-237 and Glu-266 contribute to the active site. The active-site Proton donor is His-285.

Belongs to the D-isomer specific 2-hydroxyacid dehydrogenase family. GhrB subfamily. In terms of assembly, homodimer.

It localises to the cytoplasm. The enzyme catalyses glycolate + NADP(+) = glyoxylate + NADPH + H(+). It carries out the reaction (R)-glycerate + NAD(+) = 3-hydroxypyruvate + NADH + H(+). It catalyses the reaction (R)-glycerate + NADP(+) = 3-hydroxypyruvate + NADPH + H(+). In terms of biological role, catalyzes the NADPH-dependent reduction of glyoxylate and hydroxypyruvate into glycolate and glycerate, respectively. This chain is Glyoxylate/hydroxypyruvate reductase B, found in Shigella sonnei (strain Ss046).